The chain runs to 127 residues: Fluoride-specific ion channel FluC (127 aa).

Transmembrane regions (helical) follow at residues leucine 8 to phenylalanine 28, proline 37 to isoleucine 57, tryptophan 68 to tyrosine 88, and isoleucine 100 to glycine 120. 2 residues coordinate Na(+): glycine 78 and threonine 81.

This sequence belongs to the fluoride channel Fluc/FEX (TC 1.A.43) family.

The protein resides in the cell inner membrane. The catalysed reaction is fluoride(in) = fluoride(out). Its activity is regulated as follows. Na(+) is not transported, but it plays an essential structural role and its presence is essential for fluoride channel function. Its function is as follows. Fluoride-specific ion channel. Important for reducing fluoride concentration in the cell, thus reducing its toxicity. This chain is Fluoride-specific ion channel FluC, found in Leptospira interrogans serogroup Icterohaemorrhagiae serovar Lai (strain 56601).